The following is a 204-amino-acid chain: Phosphopantothenoylcysteine decarboxylase (204 aa).

Residues Thr53 and 104–107 (DANT) each bind FMN. Asn140 lines the substrate pocket. Cys173 acts as the Proton donor in catalysis.

It belongs to the HFCD (homooligomeric flavin containing Cys decarboxylase) superfamily. In terms of assembly, homotrimer. It depends on FMN as a cofactor.

The catalysed reaction is N-[(R)-4-phosphopantothenoyl]-L-cysteine + H(+) = (R)-4'-phosphopantetheine + CO2. It functions in the pathway cofactor biosynthesis; coenzyme A biosynthesis; CoA from (R)-pantothenate: step 3/5. Its function is as follows. Catalyzes the decarboxylation of the cysteine moiety of 4-phosphopantothenoylcysteine to form 4'-phosphopantotheine and this reaction forms part of the biosynthesis of coenzyme A. The polypeptide is Phosphopantothenoylcysteine decarboxylase (Ppcdc) (Mus musculus (Mouse)).